The chain runs to 94 residues: Integration host factor subunit beta (94 aa).

It belongs to the bacterial histone-like protein family. Heterodimer of an alpha and a beta chain.

Its function is as follows. This protein is one of the two subunits of integration host factor, a specific DNA-binding protein that functions in genetic recombination as well as in transcriptional and translational control. The sequence is that of Integration host factor subunit beta from Salmonella arizonae (strain ATCC BAA-731 / CDC346-86 / RSK2980).